The sequence spans 380 residues: Queuine tRNA-ribosyltransferase (380 aa).

Catalysis depends on D96, which acts as the Proton acceptor. Substrate contacts are provided by residues 96–100 (DSGGF), D150, Q193, and G220. The RNA binding stretch occupies residues 251–257 (GVGAPDS). D270 acts as the Nucleophile in catalysis. Residues 275–279 (TRIAR) are RNA binding; important for wobble base 34 recognition. C308, C310, C313, and H339 together coordinate Zn(2+).

It belongs to the queuine tRNA-ribosyltransferase family. In terms of assembly, homodimer. Within each dimer, one monomer is responsible for RNA recognition and catalysis, while the other monomer binds to the replacement base PreQ1. The cofactor is Zn(2+).

The catalysed reaction is 7-aminomethyl-7-carbaguanine + guanosine(34) in tRNA = 7-aminomethyl-7-carbaguanosine(34) in tRNA + guanine. It participates in tRNA modification; tRNA-queuosine biosynthesis. Functionally, catalyzes the base-exchange of a guanine (G) residue with the queuine precursor 7-aminomethyl-7-deazaguanine (PreQ1) at position 34 (anticodon wobble position) in tRNAs with GU(N) anticodons (tRNA-Asp, -Asn, -His and -Tyr). Catalysis occurs through a double-displacement mechanism. The nucleophile active site attacks the C1' of nucleotide 34 to detach the guanine base from the RNA, forming a covalent enzyme-RNA intermediate. The proton acceptor active site deprotonates the incoming PreQ1, allowing a nucleophilic attack on the C1' of the ribose to form the product. After dissociation, two additional enzymatic reactions on the tRNA convert PreQ1 to queuine (Q), resulting in the hypermodified nucleoside queuosine (7-(((4,5-cis-dihydroxy-2-cyclopenten-1-yl)amino)methyl)-7-deazaguanosine). In Streptococcus equi subsp. zooepidemicus (strain H70), this protein is Queuine tRNA-ribosyltransferase.